A 74-amino-acid chain; its full sequence is Sec-independent protein translocase protein TatA (74 aa).

The chain crosses the membrane as a helical span at residues 1-21; it reads MGTFSIWHWLIVLLVVVVVFG. The tract at residues 50 to 74 is disordered; the sequence is TAPAGQVANQSTADQTIDVQTKPKG. The span at 56-68 shows a compositional bias: polar residues; the sequence is VANQSTADQTIDV.

It belongs to the TatA/E family. As to quaternary structure, the Tat system comprises two distinct complexes: a TatABC complex, containing multiple copies of TatA, TatB and TatC subunits, and a separate TatA complex, containing only TatA subunits. Substrates initially bind to the TatABC complex, which probably triggers association of the separate TatA complex to form the active translocon.

It localises to the cell inner membrane. Functionally, part of the twin-arginine translocation (Tat) system that transports large folded proteins containing a characteristic twin-arginine motif in their signal peptide across membranes. TatA could form the protein-conducting channel of the Tat system. The protein is Sec-independent protein translocase protein TatA of Verminephrobacter eiseniae (strain EF01-2).